A 248-amino-acid polypeptide reads, in one-letter code: 3-deoxy-manno-octulosonate cytidylyltransferase (248 aa).

This sequence belongs to the KdsB family.

Its subcellular location is the cytoplasm. The catalysed reaction is 3-deoxy-alpha-D-manno-oct-2-ulosonate + CTP = CMP-3-deoxy-beta-D-manno-octulosonate + diphosphate. Its pathway is nucleotide-sugar biosynthesis; CMP-3-deoxy-D-manno-octulosonate biosynthesis; CMP-3-deoxy-D-manno-octulosonate from 3-deoxy-D-manno-octulosonate and CTP: step 1/1. It functions in the pathway bacterial outer membrane biogenesis; lipopolysaccharide biosynthesis. Functionally, activates KDO (a required 8-carbon sugar) for incorporation into bacterial lipopolysaccharide in Gram-negative bacteria. The protein is 3-deoxy-manno-octulosonate cytidylyltransferase of Alteromonas mediterranea (strain DSM 17117 / CIP 110805 / LMG 28347 / Deep ecotype).